We begin with the raw amino-acid sequence, 427 residues long: Trigger factor (427 aa).

The PPIase FKBP-type domain occupies 163–248; that stretch reads GDTAVIDFEG…VHEIKAKELP (86 aa).

The protein belongs to the FKBP-type PPIase family. Tig subfamily.

It is found in the cytoplasm. The catalysed reaction is [protein]-peptidylproline (omega=180) = [protein]-peptidylproline (omega=0). Involved in protein export. Acts as a chaperone by maintaining the newly synthesized protein in an open conformation. Functions as a peptidyl-prolyl cis-trans isomerase. This chain is Trigger factor, found in Bacillus cytotoxicus (strain DSM 22905 / CIP 110041 / 391-98 / NVH 391-98).